Consider the following 357-residue polypeptide: DNA integrity scanning protein DisA (357 aa).

Residues 8 to 146 (VKSMINILQL…GNLRYTLKDI (139 aa)) form the DAC domain. Residues glycine 75, leucine 93, and 106 to 110 (MRHRT) contribute to the ATP site.

The protein belongs to the DisA family. In terms of assembly, homooctamer. Mg(2+) is required as a cofactor.

The enzyme catalyses 2 ATP = 3',3'-c-di-AMP + 2 diphosphate. Functionally, participates in a DNA-damage check-point that is active prior to asymmetric division when DNA is damaged. DisA forms globular foci that rapidly scan along the chromosomes during sporulation, searching for lesions. When a lesion is present, DisA pauses at the lesion site. This triggers a cellular response that culminates in a temporary block in sporulation initiation. Its function is as follows. Also has diadenylate cyclase activity, catalyzing the condensation of 2 ATP molecules into cyclic di-AMP (c-di-AMP). c-di-AMP acts as a signaling molecule that couples DNA integrity with progression of sporulation. The rise in c-di-AMP level generated by DisA while scanning the chromosome, operates as a positive signal that advances sporulation; upon encountering a lesion, the DisA focus arrests at the damaged site and halts c-di-AMP synthesis. The polypeptide is DNA integrity scanning protein DisA (Bacillus mycoides (strain KBAB4) (Bacillus weihenstephanensis)).